The following is a 291-amino-acid chain: 4-hydroxy-tetrahydrodipicolinate synthase (291 aa).

Threonine 45 contributes to the pyruvate binding site. The active-site Proton donor/acceptor is the tyrosine 133. Catalysis depends on lysine 161, which acts as the Schiff-base intermediate with substrate. Isoleucine 203 provides a ligand contact to pyruvate.

Belongs to the DapA family. In terms of assembly, homotetramer; dimer of dimers.

The protein localises to the cytoplasm. The catalysed reaction is L-aspartate 4-semialdehyde + pyruvate = (2S,4S)-4-hydroxy-2,3,4,5-tetrahydrodipicolinate + H2O + H(+). The protein operates within amino-acid biosynthesis; L-lysine biosynthesis via DAP pathway; (S)-tetrahydrodipicolinate from L-aspartate: step 3/4. Catalyzes the condensation of (S)-aspartate-beta-semialdehyde [(S)-ASA] and pyruvate to 4-hydroxy-tetrahydrodipicolinate (HTPA). The chain is 4-hydroxy-tetrahydrodipicolinate synthase from Neisseria gonorrhoeae (strain ATCC 700825 / FA 1090).